Here is a 234-residue protein sequence, read N- to C-terminus: Glutathione S-transferase 1 (234 aa).

The region spanning Leu3–His90 is the GST N-terminal domain. Positions Asp96 to Phe234 constitute a GST C-terminal domain.

The protein belongs to the GST superfamily. Homodimer.

The protein localises to the endoplasmic reticulum membrane. The enzyme catalyses RX + glutathione = an S-substituted glutathione + a halide anion + H(+). The protein is Glutathione S-transferase 1 (GTT1) of Saccharomyces cerevisiae (strain ATCC 204508 / S288c) (Baker's yeast).